Reading from the N-terminus, the 396-residue chain is Cysteine protease ATG4A (396 aa).

Residue C77 is the Nucleophile of the active site. Catalysis depends on residues D276 and H278. Residues 390-393 (FEIL) carry the LIR motif.

The protein belongs to the peptidase C54 family. Interacts with ATG9A; the interaction is direct.

Its subcellular location is the cytoplasm. It carries out the reaction [protein]-C-terminal L-amino acid-glycyl-phosphatidylethanolamide + H2O = [protein]-C-terminal L-amino acid-glycine + a 1,2-diacyl-sn-glycero-3-phosphoethanolamine. Inhibited by N-ethylmaleimide. Redox-regulated during autophagy since reducing conditions activate ATG4A whereas an oxidizing environment such as the presence of H(2)O(2) inhibits its activity. In terms of biological role, cysteine protease that plays a key role in autophagy by mediating both proteolytic activation and delipidation of ATG8 family proteins. The protease activity is required for proteolytic activation of ATG8 family proteins: cleaves the C-terminal amino acid of ATG8 proteins to reveal a C-terminal glycine. Exposure of the glycine at the C-terminus is essential for ATG8 proteins conjugation to phosphatidylethanolamine (PE) and insertion to membranes, which is necessary for autophagy. Preferred substrate is GABARAPL2 followed by MAP1LC3A and GABARAP. Protease activity is also required to counteract formation of high-molecular weight conjugates of ATG8 proteins (ATG8ylation): acts as a deubiquitinating-like enzyme that removes ATG8 conjugated to other proteins, such as ATG3. In addition to the protease activity, also mediates delipidation of ATG8 family proteins. Catalyzes delipidation of PE-conjugated forms of ATG8 proteins during macroautophagy. Compared to ATG4B, the major protein for proteolytic activation of ATG8 proteins, shows weaker ability to cleave the C-terminal amino acid of ATG8 proteins, while it displays stronger delipidation activity. Involved in phagophore growth during mitophagy independently of its protease activity and of ATG8 proteins: acts by regulating ATG9A trafficking to mitochondria and promoting phagophore-endoplasmic reticulum contacts during the lipid transfer phase of mitophagy. The sequence is that of Cysteine protease ATG4A from Mus musculus (Mouse).